We begin with the raw amino-acid sequence, 311 residues long: Coproporphyrin III ferrochelatase 1 (311 aa).

Fe-coproporphyrin III-binding positions include tyrosine 12, arginine 29, 45-46 (RY), serine 53, and tyrosine 124. Fe(2+)-binding residues include histidine 182 and glutamate 263.

It belongs to the ferrochelatase family.

It localises to the cytoplasm. It carries out the reaction Fe-coproporphyrin III + 2 H(+) = coproporphyrin III + Fe(2+). It functions in the pathway porphyrin-containing compound metabolism; protoheme biosynthesis. Its function is as follows. Involved in coproporphyrin-dependent heme b biosynthesis. Catalyzes the insertion of ferrous iron into coproporphyrin III to form Fe-coproporphyrin III. The protein is Coproporphyrin III ferrochelatase 1 of Bacillus cereus (strain ATCC 10987 / NRS 248).